Consider the following 328-residue polypeptide: 4-hydroxythreonine-4-phosphate dehydrogenase (328 aa).

The substrate site is built by His-134 and Thr-135. His-164, His-209, and His-264 together coordinate a divalent metal cation. Residues Lys-272, Asn-281, and Arg-290 each coordinate substrate.

This sequence belongs to the PdxA family. Homodimer. Zn(2+) serves as cofactor. Mg(2+) is required as a cofactor. It depends on Co(2+) as a cofactor.

It is found in the cytoplasm. It catalyses the reaction 4-(phosphooxy)-L-threonine + NAD(+) = 3-amino-2-oxopropyl phosphate + CO2 + NADH. Its pathway is cofactor biosynthesis; pyridoxine 5'-phosphate biosynthesis; pyridoxine 5'-phosphate from D-erythrose 4-phosphate: step 4/5. In terms of biological role, catalyzes the NAD(P)-dependent oxidation of 4-(phosphooxy)-L-threonine (HTP) into 2-amino-3-oxo-4-(phosphooxy)butyric acid which spontaneously decarboxylates to form 3-amino-2-oxopropyl phosphate (AHAP). The polypeptide is 4-hydroxythreonine-4-phosphate dehydrogenase (Shewanella denitrificans (strain OS217 / ATCC BAA-1090 / DSM 15013)).